Here is a 411-residue protein sequence, read N- to C-terminus: Z-DNA-binding protein 1 (411 aa).

Z-binding domains follow at residues 8 to 70 and 84 to 148; these read LSTG…SIGG and SSAQ…HSRQ. Glycyl lysine isopeptide (Lys-Gly) (interchain with G-Cter in ubiquitin) cross-links involve residues Lys17 and Lys43. The interval 60-86 is disordered; that stretch reads SPEPATWSIGGAASGDGAPAIPENSSA. Short sequence motifs (RIP homotypic interaction motif (RHIM)) lie at residues 188 to 205 and 237 to 261; these read NSNA…REKA and YIYM…LVGD. Disordered stretches follow at residues 263 to 303 and 332 to 411; these read GKHP…EGDT and KGEV…LSKQ. Composition is skewed to polar residues over residues 268–292, 350–371, and 400–411; these read YSFS…NMQT, GTSS…SMLP, and IESSQDTGLSKQ.

Homodimer. Interacts (via RIP homotypic interaction motif) with RIPK3; leading to RIPK3 activation and necroptosis; interaction is enhanced by CASP6. Interacts (via RIP homotypic interaction motif) with RIPK1. Component of the AIM2 PANoptosome complex, a multiprotein complex that drives inflammatory cell death (PANoptosis). As to quaternary structure, (Microbial infection) Interacts (via RIP homotypic interaction motif) with murid herpesvirus protein RIR1 (via RIP homotypic interaction motif); leading to inhibition of ZBP1-dependent necroptosis. In terms of assembly, (Microbial infection) Interacts with vaccinia virus E3 protein; leading to inhibit ZBP1-dependent necroptosis. In terms of processing, ubiquitinated; polyubiquitinated following influenza A virus (IAV) infection. Post-translationally, phosphorylated. In terms of tissue distribution, expressed in lung, spleen and liver. Lower levels were seen in heart, kidney and testis. Expression is greatly up-regulated in tumor stromal cells and activated macrophages.

It is found in the cytoplasm. The protein localises to the nucleus. With respect to regulation, ZBP1-dependent necroptosis is normally inhibited by RIPK1: RIPK1 inhibits the ZBP1-induced activation of RIPK3 via FADD-mediated recruitment of CASP8, which cleaves RIPK1 and limits TNF-induced necroptosis. Key innate sensor that recognizes and binds Z-RNA structures, which are produced by a number of viruses, such as herpesvirus, orthomyxovirus or flavivirus, and triggers different forms of cell death. ZBP1 acts as an essential mediator of pyroptosis, necroptosis and apoptosis (PANoptosis), an integral part of host defense against pathogens, by activating RIPK3, caspase-8 (CASP8), and the NLRP3 inflammasome. Key activator of necroptosis, a programmed cell death process in response to death-inducing TNF-alpha family members, via its ability to bind Z-RNA: once activated upon Z-RNA-binding, ZBP1 interacts and stimulates RIPK3 kinase, which phosphorylates and activates MLKL, triggering execution of programmed necrosis. In addition to TNF-induced necroptosis, necroptosis can also take place in the nucleus in response to orthomyxoviruses infection: ZBP1 recognizes and binds Z-RNA structures that are produced in infected nuclei by orthomyxoviruses, such as the influenza A virus (IAV), leading to ZBP1 activation, RIPK3 stimulation and subsequent MLKL phosphorylation, triggering disruption of the nuclear envelope and leakage of cellular DNA into the cytosol. ZBP1-dependent cell death in response to IAV infection promotes interleukin-1 alpha (IL1A) induction in an NLRP3-inflammasome-independent manner: IL1A expression is required for the optimal interleukin-1 beta (IL1B) production, and together, these cytokines promote infiltration of inflammatory neutrophils to the lung, leading to the formation of neutrophil extracellular traps. In addition to its direct role in driving necroptosis via its ability to sense Z-RNAs, also involved in PANoptosis triggered in response to bacterial infection: component of the AIM2 PANoptosome complex, a multiprotein complex that triggers PANoptosis. Also acts as the apical sensor of fungal infection responsible for activating PANoptosis. Involved in CASP8-mediated cell death via its interaction with RIPK1 but independently of its ability to sense Z-RNAs. In some cell types, also able to restrict viral replication by promoting cell death-independent responses. In response to flavivirus infection in neurons, promotes a cell death-independent pathway that restricts viral replication: together with RIPK3, promotes a death-independent transcriptional program that modifies the cellular metabolism via up-regulation expression of the enzyme ACOD1/IRG1 and production of the metabolite itaconate. Itaconate inhibits the activity of succinate dehydrogenase, generating a metabolic state in neurons that suppresses replication of viral genomes. This Mus musculus (Mouse) protein is Z-DNA-binding protein 1.